The following is an 84-amino-acid chain: ATP synthase subunit c (84 aa).

2 consecutive transmembrane segments (helical) span residues 21–38 and 60–80; these read ALGA…IGKI and MIII…VCLL.

This sequence belongs to the ATPase C chain family. In terms of assembly, F-type ATPases have 2 components, F(1) - the catalytic core - and F(0) - the membrane proton channel. F(1) has five subunits: alpha(3), beta(3), gamma(1), delta(1), epsilon(1). F(0) has three main subunits: a(1), b(2) and c(10-14). The alpha and beta chains form an alternating ring which encloses part of the gamma chain. F(1) is attached to F(0) by a central stalk formed by the gamma and epsilon chains, while a peripheral stalk is formed by the delta and b chains.

The protein resides in the cell inner membrane. Its function is as follows. F(1)F(0) ATP synthase produces ATP from ADP in the presence of a proton or sodium gradient. F-type ATPases consist of two structural domains, F(1) containing the extramembraneous catalytic core and F(0) containing the membrane proton channel, linked together by a central stalk and a peripheral stalk. During catalysis, ATP synthesis in the catalytic domain of F(1) is coupled via a rotary mechanism of the central stalk subunits to proton translocation. Key component of the F(0) channel; it plays a direct role in translocation across the membrane. A homomeric c-ring of between 10-14 subunits forms the central stalk rotor element with the F(1) delta and epsilon subunits. This is ATP synthase subunit c from Phocaeicola vulgatus (strain ATCC 8482 / DSM 1447 / JCM 5826 / CCUG 4940 / NBRC 14291 / NCTC 11154) (Bacteroides vulgatus).